Consider the following 436-residue polypeptide: 23S rRNA (uracil(1939)-C(5))-methyltransferase RlmD (436 aa).

A TRAM domain is found at 10-68; the sequence is KQKTTQKIVAEIQDLDYQGLGVAKIQGKTWFIENALPTEKVEAVVTDEKRQYGLATAQK. [4Fe-4S] cluster-binding residues include cysteine 81, cysteine 87, cysteine 90, and cysteine 168. Residues glutamine 270, phenylalanine 299, asparagine 304, glutamate 320, aspartate 347, and aspartate 368 each coordinate S-adenosyl-L-methionine. Cysteine 394 functions as the Nucleophile in the catalytic mechanism.

The protein belongs to the class I-like SAM-binding methyltransferase superfamily. RNA M5U methyltransferase family. RlmD subfamily.

It catalyses the reaction uridine(1939) in 23S rRNA + S-adenosyl-L-methionine = 5-methyluridine(1939) in 23S rRNA + S-adenosyl-L-homocysteine + H(+). In terms of biological role, catalyzes the formation of 5-methyl-uridine at position 1939 (m5U1939) in 23S rRNA. This is 23S rRNA (uracil(1939)-C(5))-methyltransferase RlmD from Haemophilus parainfluenzae (strain T3T1).